An 893-amino-acid polypeptide reads, in one-letter code: Serine/threonine-protein kinase/endoribonuclease IRE1 (893 aa).

Residues Met-1 to Phe-19 form the signal peptide. At Arg-20–Trp-379 the chain is on the lumenal side. 4 N-linked (GlcNAc...) asparagine glycosylation sites follow: Asn-105, Asn-158, Asn-259, and Asn-351. The helical transmembrane segment at Leu-380–Ala-397 threads the bilayer. Over Asp-398–Ala-893 the chain is Cytoplasmic. The interval Ala-451 to Leu-478 is disordered. Residues Cys-491–Phe-759 enclose the Protein kinase domain. ATP contacts are provided by residues Ile-497–Val-505 and Lys-519. The active-site Proton acceptor is Asp-625. Residues Pro-762–Gly-890 form the KEN domain.

This sequence belongs to the protein kinase superfamily. Ser/Thr protein kinase family. In terms of assembly, homodimer; disulfide-linked. Dimer formation is driven by hydrophobic interactions within the N-terminal luminal domains and stabilized by disulfide bridges. In terms of processing, autophosphorylated. In terms of tissue distribution, expressed in roots, nodes, internodes, leaf sheaths, leaf blades, young ears and mature ears.

It is found in the endoplasmic reticulum membrane. It catalyses the reaction L-seryl-[protein] + ATP = O-phospho-L-seryl-[protein] + ADP + H(+). It carries out the reaction L-threonyl-[protein] + ATP = O-phospho-L-threonyl-[protein] + ADP + H(+). Its function is as follows. Involved in endoplasmic reticulum (ER) stress response. Senses unfolded proteins in the lumen of the ER via its N-terminal domain which leads to enzyme auto-activation. The active endoribonuclease domain splices bZIP50 mRNA to generate a new C-terminus, converting it into a potent unfolded-protein response (UPR) transcriptional activator, which then induces transcription of UPR target genes, such as luminal-binding protein (BiP) chaperones. This Oryza sativa subsp. japonica (Rice) protein is Serine/threonine-protein kinase/endoribonuclease IRE1.